Reading from the N-terminus, the 310-residue chain is Methionyl-tRNA formyltransferase (310 aa).

Residue 110–113 coordinates (6S)-5,6,7,8-tetrahydrofolate; the sequence is SLLP.

It belongs to the Fmt family.

It carries out the reaction L-methionyl-tRNA(fMet) + (6R)-10-formyltetrahydrofolate = N-formyl-L-methionyl-tRNA(fMet) + (6S)-5,6,7,8-tetrahydrofolate + H(+). Attaches a formyl group to the free amino group of methionyl-tRNA(fMet). The formyl group appears to play a dual role in the initiator identity of N-formylmethionyl-tRNA by promoting its recognition by IF2 and preventing the misappropriation of this tRNA by the elongation apparatus. The sequence is that of Methionyl-tRNA formyltransferase from Clostridium tetani (strain Massachusetts / E88).